The chain runs to 541 residues: MAKTIAYDEEARRGLERGLNALADAVKVTLGPKGRNVVLEKKWGAPTITNDGVSIAKEIELEDPYEKIGAELVKEVAKKTDDVAGDGTTTATVLAQALVKEGLRNVAAGANPLGLKRGIEKAVEKVTETLLKSAKEVETKEQIAATAAISAGDQSIGDLIAEAMDKVGNEGVITVEESNTFGLQLELTEGMRFDKGYISGYFVTDAERQEAVLEDPYILLVSSKVSTVKDLLPLLEKVIQGGKPLLIIAEDVEGEALSTLVVNKIRGTFKSVAVKAPGFGDRRKAMLQDMAILTGGQVISEEVGLSLETADISLLGKARKVVITKDETTLVEGAGDSDAIAGRVAQIRAEIENSDSDYDREKLQERLAKLAGGVAVIKAGAATEVELKERKHRIEDAVRNAKAAVEEGIVAGGGVALLHAVPSLDELKLSGDEATGANIVRVALEAPLKQIAFNGGLEPGVVAEKVRNSPVGTGLNAATGVYEDLLKAGVADPVKVTRSALQNAASIAGLFLTTEAVVADKPEKAAAPAGDPTGGMGGMDF.

ATP contacts are provided by residues 29–32 (TLGP), 86–90 (DGTTT), G413, 476–478 (NAA), and D492.

The protein belongs to the chaperonin (HSP60) family. In terms of assembly, forms a cylinder of 14 subunits composed of two heptameric rings stacked back-to-back. Interacts with the co-chaperonin GroES.

Its subcellular location is the secreted. It localises to the capsule. The protein resides in the cell surface. It is found in the cell wall. It carries out the reaction ATP + H2O + a folded polypeptide = ADP + phosphate + an unfolded polypeptide.. In terms of biological role, together with its co-chaperonin GroES, plays an essential role in assisting protein folding. The GroEL-GroES system forms a nano-cage that allows encapsulation of the non-native substrate proteins and provides a physical environment optimized to promote and accelerate protein folding. The sequence is that of Chaperonin GroEL 2 from Mycobacterium ulcerans (strain Agy99).